The chain runs to 495 residues: SH2 domain-containing adapter protein E (495 aa).

Disordered regions lie at residues 51–190 (TVSE…DKGK), 203–233 (DYADPYDAKRTKGQRDAERVGENDGYMEPYD), and 256–327 (LLDS…EYEQ). Residue Ser-107 is modified to Phosphoserine. The span at 135 to 144 (TKSSGCSTYI) shows a compositional bias: polar residues. Over residues 148–157 (IKVDTQEKNG) the composition is skewed to basic and acidic residues. A compositionally biased stretch (low complexity) spans 162-181 (PSSSSSSSSSSSSASSSPSS). 2 stretches are compositionally biased toward basic and acidic residues: residues 208-224 (YDAKRTKGQRDAERVGE) and 301-327 (PRAEGKARPPDSRLPENDERPAAEYEQ). The 96-residue stretch at 395 to 490 (WYHGAISRAE…AEHMTLLYPV (96 aa)) folds into the SH2 domain.

This Homo sapiens (Human) protein is SH2 domain-containing adapter protein E (SHE).